A 639-amino-acid polypeptide reads, in one-letter code: Protein phosphatase 2C 35 (639 aa).

In terms of domain architecture, PPM-type phosphatase spans 227-630 (GGDPCGLQWA…DDVSVIVISL (404 aa)). Mn(2+) contacts are provided by Asp262 and Gly263. A disordered region spans residues 295-341 (QNVQHDQRPDQPGSAPSTTASDNQDQWGRRRRTRRSRPPRGADDDQR). Residues 308–320 (SAPSTTASDNQDQ) are compositionally biased toward polar residues. Positions 323-332 (RRRRTRRSRP) are enriched in basic residues. Mn(2+) is bound by residues Asp558 and Asp621.

It belongs to the PP2C family. In terms of assembly, interacts with XA21 (via juxtamembrane and kinase domains). The cofactor is Mg(2+). Mn(2+) is required as a cofactor.

The protein localises to the cell membrane. The enzyme catalyses O-phospho-L-seryl-[protein] + H2O = L-seryl-[protein] + phosphate. The catalysed reaction is O-phospho-L-threonyl-[protein] + H2O = L-threonyl-[protein] + phosphate. Its function is as follows. Protein phosphatase that acts on XA21 pathogen recognition receptor. Negatively regulates cell death and XA21-mediated innate immunity. This is Protein phosphatase 2C 35 (XB15) from Oryza sativa subsp. japonica (Rice).